A 221-amino-acid polypeptide reads, in one-letter code: PKHD-type hydroxylase PMT9312_1262 (221 aa).

The 95-residue stretch at 80-174 (IIHGIMFTKS…RLVCVGWIES (95 aa)) folds into the Fe2OG dioxygenase domain. Residues His-98, Asp-100, and His-155 each contribute to the Fe cation site. Arg-165 contacts 2-oxoglutarate.

The cofactor is Fe(2+). It depends on L-ascorbate as a cofactor.

The chain is PKHD-type hydroxylase PMT9312_1262 from Prochlorococcus marinus (strain MIT 9312).